The sequence spans 167 residues: uncharacterized protein (167 aa).

This sequence to A.aeolicus aq_328.

This is an uncharacterized protein from Aquifex aeolicus (strain VF5).